The sequence spans 158 residues: Complexin-3 (158 aa).

A disordered region spans residues 14–47 (KNLTGSLGGGEDKGDGDKSAAEAQGMSREEYEEY). Basic and acidic residues predominate over residues 23 to 33 (GEDKGDGDKSA). Positions 39 to 74 (MSREEYEEYQKQLVEEKMERDAQFTQRKAERATLRS) form a coiled coil. C155 bears the Cysteine methyl ester mark. Residue C155 is the site of S-farnesyl cysteine attachment. Positions 156-158 (HIM) are cleaved as a propeptide — removed in mature form.

This sequence belongs to the complexin/synaphin family. In terms of assembly, binds to the SNARE core complex containing SNAP25, VAMP2 and STX1A. Farnesylation mediates presynaptic targeting. In terms of tissue distribution, present in many brain regions, including hippocampus and cerebellum (at protein level). Expressed in the retina (at protein level). Expressed in retinal amacrine cells (at protein level). Expressed in retinal photoreceptor ribbon synapses. Expressed in the retinal inner nuclear layer, at bipolar cells (at protein level). Expressed in cone photoreceptor synaptic terminals (at protein level).

It localises to the synapse. The protein resides in the cell membrane. Complexin that regulates SNARE protein complex-mediated synaptic vesicle fusion. Required for the maintenance of synaptic ultrastructure in the adult retina. Positively regulates synaptic transmission through synaptic vesicle availability and exocytosis of neurotransmitters at photoreceptor ribbon synapses in the retina. Suppresses tonic photoreceptor activity and baseline 'noise' by suppression of Ca(2+) vesicle tonic release and the facilitation of evoked synchronous and asynchronous Ca(2+) vesicle release. The protein is Complexin-3 (Cplx3) of Mus musculus (Mouse).